Consider the following 265-residue polypeptide: Sulfur carrier protein FdhD (265 aa).

Cys-107 functions as the Cysteine persulfide intermediate in the catalytic mechanism.

This sequence belongs to the FdhD family.

The protein resides in the cytoplasm. Required for formate dehydrogenase (FDH) activity. Acts as a sulfur carrier protein that transfers sulfur from IscS to the molybdenum cofactor prior to its insertion into FDH. The chain is Sulfur carrier protein FdhD from Staphylococcus aureus (strain bovine RF122 / ET3-1).